We begin with the raw amino-acid sequence, 421 residues long: Imidazolonepropionase (421 aa).

His81 and His83 together coordinate Fe(3+). Zn(2+) is bound by residues His81 and His83. Positions 90, 153, and 186 each coordinate 4-imidazolone-5-propanoate. Tyr153 lines the N-formimidoyl-L-glutamate pocket. Residue His251 coordinates Fe(3+). His251 provides a ligand contact to Zn(2+). Glu254 is a binding site for 4-imidazolone-5-propanoate. Asp326 lines the Fe(3+) pocket. Asp326 is a Zn(2+) binding site. N-formimidoyl-L-glutamate is bound by residues Asn328 and Gly330. Ser331 is a binding site for 4-imidazolone-5-propanoate.

This sequence belongs to the metallo-dependent hydrolases superfamily. HutI family. Zn(2+) is required as a cofactor. It depends on Fe(3+) as a cofactor.

It is found in the cytoplasm. The catalysed reaction is 4-imidazolone-5-propanoate + H2O = N-formimidoyl-L-glutamate. It participates in amino-acid degradation; L-histidine degradation into L-glutamate; N-formimidoyl-L-glutamate from L-histidine: step 3/3. In terms of biological role, catalyzes the hydrolytic cleavage of the carbon-nitrogen bond in imidazolone-5-propanoate to yield N-formimidoyl-L-glutamate. It is the third step in the universal histidine degradation pathway. The polypeptide is Imidazolonepropionase (Streptococcus pyogenes serotype M12 (strain MGAS2096)).